We begin with the raw amino-acid sequence, 132 residues long: Translation initiation factor 5A (132 aa).

K36 is modified (hypusine).

The protein belongs to the eIF-5A family.

The protein localises to the cytoplasm. Its function is as follows. Functions by promoting the formation of the first peptide bond. This chain is Translation initiation factor 5A (eIF5A), found in Pyrobaculum arsenaticum (strain DSM 13514 / JCM 11321 / PZ6).